A 1830-amino-acid chain; its full sequence is MSLRGPMKRSHLRQVSAASLDSLSTSRSLEASHHDAPSDHPSTPDERAIRLSFPGLERRQCTLWVHDETFSREEILFNQTAFSDTGVSAGDVVEILHARHTADGAHSLKADLGSKSLRDSHAKSSSTLHLDALSKFKTPLQSRCLFVVKPLPQDIKTRHPKLELSVTTSIANIFGFKNRDTVYVSIVDRAQCSASHVDIAFRDQYVVRSDMWRLVMSELADKIVYKGQKIVFMGSIKATVKNIFIRGEKVLSGYFSPQTIPVFRSESAKYVLFIQMSREMWDFDSEGTGDILFSRVINGFLPELFKRWANSDARHLVTIVLFTRVEYDASTIGMSSTLSPESLKNIFNSNHAPTRDFYRVVVNDMASGHWTTILDELKKDFRTFLRDVSTLKVDDAPVAKANGSASAPNARPAVIAGRPSTALRGNILEAIHLASSHLAYDHIDRDMVHTGTSIIVITPGSGVFEVSYESLASTTEALTNRGIAIDLVCLSPMPLHSVPLFKYREPPRRPSTSSFGDIQHGGYSPEMRHSFASLANRTPHLSPKSAIQDSFPGIGLRDSWSTRPQEWNYGIPHWLDISYWNPDTYREARRILKNDPNAPIPFTVTKRSKIFVPRVRMYEIQMMGVMESEQSNISIPYLLEGQSLSRGPSPGLSLSPASLAAPGKPSSRRSSNFRHQLSDSLRPEPFLQNMENPKDVILAKSKKTPNSVLSWMDKYDEKVFQPFPKQRQRRRSPKQKRPSEPNVQVSGAHDRISARSISHLRQHETSGPRPAVRKVEPSFPTPKSPSSAKSASPKKPALKTKSTTKVPRISRTISFALRGLSSTPPRAVASTEVNVEHATGKSSTDTFPDSKSVDSLSVSDSASTRTVIEVSKPPGTPQKPVQSSAITPSRPISIRPAPKLPEEPEQPNRSLAASFSTTATEIPLTEDTRSAAQLRKRGPKFEVTMDPGSRDGQIKSPQSKALAPWVRSINPCNTPREVLRDTTWFGRWQHAYPRPPHVAVVKWKSLKSPAILPLTTEEFPTATELATEYLQTPYRVFPNDDTEGVEAPKTRGVLLREMISLRLSHGFQIVVGKNVVEVSGQYSLQSPNVFDTKGLERDGATVFLSKGKSIHRLICVEGAEIEVTRFTHRSSSVLSPERTNGCTVYTAAMRTILNPVYEIKEIKLDSTTEEYNWNYADNYVAGHRDYLYNPAQQLQFWRVRYVLIPMHLRRNIQSFNEDNEEEIHLLGIDHLTHIWQRHKYVPPEEKRFDTSNKKREQNPLNIMYQTRNPSEVVAAELDRILLTDPGLDSSPAQLLPESELLERSSISLSSLAQIIQGDNGVRMMDRRWHWRLHYNCFIGFELTTWLLQNFRDIDTREEAVEFGDQLMKHGLFQHVEKRHNFRDGNYFYQISSEYRVARPESRNSWFPQIRTEKSTPSTPAGDHSKESPVVGHARSDSVDDTPVQTPTTPSKSKNKATIMLSKSMKYDVDPRKRSNRPEVVDLHYDRLHNPDNCFHLELSWMNTTAKLIEDTVLSWASTAEKFGLKLVQVPIAEACAIDQTQPFRKPYRVQLKVPPPKAPAPTFFNPVSFAQQGAPDQHYFQKALLRKFDFVLDFEARSAFPADVEVSYSWGIPDYRYSQYIHRSGSLLAQITDEGDILLLANRLVSTRSAASRDIPRHERMDRPDQYRARAATYDPGDRMSPRLSPVARPVHDMASPLSPQGHPPLDSANLYRAPEHILSGIVEFCSDAEKLEQFYDESLARPASTKVGPAPATLMDSSIPSLELPASVVSHHISPPPILPSRGPQGSTTVPSVDLRSQVRDDSALPRGSPRAGPRASPLSSGLRPLRLG.

The span at 1–12 (MSLRGPMKRSHL) shows a compositional bias: basic residues. Disordered stretches follow at residues 1–47 (MSLR…PDER), 646–689 (RGPS…FLQN), 720–810 (FQPF…PRIS), and 822–960 (STPP…PQSK). Positions 16 to 29 (SAASLDSLSTSRSL) are enriched in polar residues. A compositionally biased stretch (basic and acidic residues) spans 30–47 (EASHHDAPSDHPSTPDER). Low complexity predominate over residues 646-665 (RGPSPGLSLSPASLAAPGKP). The span at 668–679 (RRSSNFRHQLSD) shows a compositional bias: polar residues. Basic residues predominate over residues 726–736 (QRQRRRSPKQK). Low complexity-rich tracts occupy residues 784–805 (SPSS…STTK) and 849–863 (DSKS…DSAS). Positions 907-920 (PNRSLAASFSTTAT) are enriched in polar residues. The 76-residue stretch at 1317–1392 (GDNGVRMMDR…DGNYFYQISS (76 aa)) folds into the DEP domain. Disordered regions lie at residues 1407–1456 (PQIR…KNKA) and 1774–1830 (ISPP…LRLG). Low complexity-rich tracts occupy residues 1440-1450 (DTPVQTPTTPS) and 1815-1830 (PRAS…LRLG).

The protein belongs to the IML1 family.

The protein resides in the vacuole membrane. This is Vacuolar membrane-associated protein iml1 (iml1) from Aspergillus terreus (strain NIH 2624 / FGSC A1156).